The primary structure comprises 326 residues: Malate dehydrogenase (326 aa).

12–18 is an NAD(+) binding site; sequence GAAGQIA. Positions 93 and 99 each coordinate substrate. NAD(+) contacts are provided by residues Asn106, Gln113, and 130–132; that span reads VGN. Substrate is bound by residues Asn132 and Arg163. His188 serves as the catalytic Proton acceptor.

It belongs to the LDH/MDH superfamily. MDH type 2 family.

The enzyme catalyses (S)-malate + NAD(+) = oxaloacetate + NADH + H(+). Catalyzes the reversible oxidation of malate to oxaloacetate. This is Malate dehydrogenase from Corynebacterium diphtheriae (strain ATCC 700971 / NCTC 13129 / Biotype gravis).